We begin with the raw amino-acid sequence, 467 residues long: Probable apyrase 2 (467 aa).

Over 1–25 (MRRYSALPGGGARPDTLADRLHRYR) the chain is Cytoplasmic. Residues 26–46 (GVLLVILAPLALVSLVLLLMP) traverse the membrane as a helical; Signal-anchor for type II membrane protein segment. The Extracellular portion of the chain corresponds to 47-467 (RSPASSSAAA…PLGSAIEVAS (421 aa)). 70-80 (VIFDAGSSGSR) is an ATP binding site. The active-site Proton acceptor is the Glu-192. 216-226 (GVVDLGGGSVQ) is a binding site for ATP.

Belongs to the GDA1/CD39 NTPase family. Ca(2+) serves as cofactor.

Its subcellular location is the membrane. It carries out the reaction a ribonucleoside 5'-triphosphate + 2 H2O = a ribonucleoside 5'-phosphate + 2 phosphate + 2 H(+). In terms of biological role, catalyzes the hydrolysis of phosphoanhydride bonds of nucleoside tri- and di-phosphates. In Oryza sativa subsp. japonica (Rice), this protein is Probable apyrase 2 (APY2).